The following is a 299-amino-acid chain: Phosphate import ATP-binding protein PstB 1 (299 aa).

Residues 1–51 (MTENEMTSNDSTEPTPTTETAASSPDPSGDPLIEQSIDVEGTDSTAAETGK) are disordered. Over residues 10–27 (DSTEPTPTTETAASSPDP) the composition is skewed to low complexity. The ABC transporter domain occupies 54-294 (IESSDLNVFY…PESQRVEDYI (241 aa)). 86–93 (GPSGCGKS) contributes to the ATP binding site.

Belongs to the ABC transporter superfamily. Phosphate importer (TC 3.A.1.7) family. In terms of assembly, the complex is composed of two ATP-binding proteins (PstB), two transmembrane proteins (PstC and PstA) and a solute-binding protein (PstS).

It is found in the cell membrane. The enzyme catalyses phosphate(out) + ATP + H2O = ADP + 2 phosphate(in) + H(+). In terms of biological role, part of the ABC transporter complex PstSACB involved in phosphate import. Responsible for energy coupling to the transport system. This is Phosphate import ATP-binding protein PstB 1 from Haloarcula marismortui (strain ATCC 43049 / DSM 3752 / JCM 8966 / VKM B-1809) (Halobacterium marismortui).